Consider the following 194-residue polypeptide: NADPH-flavin oxidoreductase (194 aa).

This sequence belongs to the non-flavoprotein flavin reductase family. As to quaternary structure, homodimer. It can form an isobutylamine N-hydroxylase two component enzyme system formed of a flavin reductase component (VlmR) and a monooxygenase component (VlmH).

The enzyme catalyses FADH2 + NADP(+) = FAD + NADPH + 2 H(+). It carries out the reaction FMNH2 + NADP(+) = FMN + NADPH + 2 H(+). In terms of biological role, involved in the biosynthesis of the azoxy antibiotic valanimycin, which has an antitumor activity. Catalyzes the reduction of FAD/FMN to FADH(2)/FMNH(2) which are subsequently used for the hydroxylation of isobutylamine by the isobutylamine N-hydroxylase VlmH. It can reduce either FAD or flavin mononucleotide (FMN) but prefers FAD. The enzyme has a strong preference for NADPH as acceptor. The polypeptide is NADPH-flavin oxidoreductase (Streptomyces viridifaciens).